Consider the following 391-residue polypeptide: MFSPWKISMFLSVREDSVPTTASFSADMLNVTLQGPTLNGTFAQSKCPQVEWLGWLNTIQPPFLWVLFVLATLENIFVLSVFCLHKSSCTVAEIYLGNLAAADLILACGLPFWAITISNNFDWLFGETLCRVVNAIISMNLYSSICFLMLVSIDRYLALVKTMSMGRMRGVRWAKLYSLVIWGCTLLLSSPMLVFRTMKEYSDEGHNVTACVISYPSLIWEVFTNMLLNVVGFLLPLSVITFCTMQIMQVLRNNEMQKFKEIQTERRATVLVLVVLLLFIICWLPFQISTFLDTLHRLGILSSCQDERIIDVITQIASFMAYSNSCLNPLVYVIVGKRFRKKSWEVYQGVCQKGGCRSEPIQMENSMGTLRTSISVERQIHKLQDWAGSRQ.

Topologically, residues 1–60 (MFSPWKISMFLSVREDSVPTTASFSADMLNVTLQGPTLNGTFAQSKCPQVEWLGWLNTIQ) are extracellular. N-linked (GlcNAc...) asparagine glycosylation is found at asparagine 30 and asparagine 39. A helical membrane pass occupies residues 61–84 (PPFLWVLFVLATLENIFVLSVFCL). At 85 to 93 (HKSSCTVAE) the chain is on the cytoplasmic side. A helical membrane pass occupies residues 94-118 (IYLGNLAAADLILACGLPFWAITIS). The Extracellular segment spans residues 119 to 131 (NNFDWLFGETLCR). Cysteine 130 and cysteine 211 are disulfide-bonded. Residues 132–153 (VVNAIISMNLYSSICFLMLVSI) traverse the membrane as a helical segment. Over 154–175 (DRYLALVKTMSMGRMRGVRWAK) the chain is Cytoplasmic. Tyrosine 156 is modified (phosphotyrosine). Residues 176–198 (LYSLVIWGCTLLLSSPMLVFRTM) form a helical membrane-spanning segment. Residues 199–221 (KEYSDEGHNVTACVISYPSLIWE) lie on the Extracellular side of the membrane. The N-linked (GlcNAc...) asparagine glycan is linked to asparagine 207. Residues 222 to 248 (VFTNMLLNVVGFLLPLSVITFCTMQIM) traverse the membrane as a helical segment. At 249–267 (QVLRNNEMQKFKEIQTERR) the chain is on the cytoplasmic side. A helical membrane pass occupies residues 268-292 (ATVLVLVVLLLFIICWLPFQISTFL). Residues 293-311 (DTLHRLGILSSCQDERIID) are Extracellular-facing. A helical membrane pass occupies residues 312–335 (VITQIASFMAYSNSCLNPLVYVIV). Residues 336 to 391 (GKRFRKKSWEVYQGVCQKGGCRSEPIQMENSMGTLRTSISVERQIHKLQDWAGSRQ) lie on the Cytoplasmic side of the membrane. Tyrosine 347 carries the phosphotyrosine modification. Cysteine 351 is lipidated: S-palmitoyl cysteine. Serine 366 carries the post-translational modification Phosphoserine. A Phosphothreonine modification is found at threonine 369. 2 positions are modified to phosphoserine; by GRK6: serine 373 and serine 375.

It belongs to the G-protein coupled receptor 1 family. Bradykinin receptor subfamily. BDKRB2 sub-subfamily. As to quaternary structure, forms a complex with PECAM1 and GNAQ. Interacts with PECAM1. Ubiquitous. Widespread in normal smooth muscle tissue and neurons.

The protein resides in the cell membrane. Its function is as follows. Receptor for bradykinin. It is associated with G proteins that activate a phosphatidylinositol-calcium second messenger system. The sequence is that of B2 bradykinin receptor (BDKRB2) from Homo sapiens (Human).